Here is a 155-residue protein sequence, read N- to C-terminus: MPKFIEGNLDAKGLTFGIVVSRFNSFICERLLEGAIDALVRHGANETDITVARIPGAFEIPLAAKTMAASQKFDAVICLGAVIRGSTPHFEYVSSEVSKGVASVSLESGLPIAFGVLTTDTIEQAVERAGTKAGNKGFEAAVTAIETVNVIKAMK.

5-amino-6-(D-ribitylamino)uracil contacts are provided by residues Phe-23, 57 to 59 (AFE), and 81 to 83 (AVI). 86-87 (ST) contributes to the (2S)-2-hydroxy-3-oxobutyl phosphate binding site. His-89 (proton donor) is an active-site residue. Residue Phe-114 participates in 5-amino-6-(D-ribitylamino)uracil binding. A (2S)-2-hydroxy-3-oxobutyl phosphate-binding site is contributed by Arg-128.

The protein belongs to the DMRL synthase family.

It catalyses the reaction (2S)-2-hydroxy-3-oxobutyl phosphate + 5-amino-6-(D-ribitylamino)uracil = 6,7-dimethyl-8-(1-D-ribityl)lumazine + phosphate + 2 H2O + H(+). It participates in cofactor biosynthesis; riboflavin biosynthesis; riboflavin from 2-hydroxy-3-oxobutyl phosphate and 5-amino-6-(D-ribitylamino)uracil: step 1/2. Its function is as follows. Catalyzes the formation of 6,7-dimethyl-8-ribityllumazine by condensation of 5-amino-6-(D-ribitylamino)uracil with 3,4-dihydroxy-2-butanone 4-phosphate. This is the penultimate step in the biosynthesis of riboflavin. The polypeptide is 6,7-dimethyl-8-ribityllumazine synthase (Trichlorobacter lovleyi (strain ATCC BAA-1151 / DSM 17278 / SZ) (Geobacter lovleyi)).